The chain runs to 79 residues: uncharacterized protein (79 aa).

This is an uncharacterized protein from Streptomyces lividans.